The chain runs to 287 residues: Cysteine-rich repeat secretory protein 58 (287 aa).

The N-terminal stretch at 1–20 (METTKKLFALLCLFVTMNQA) is a signal peptide. Topologically, residues 21 to 267 (ISVSDPDDME…GSFSHRGNNK (247 aa)) are extracellular. Gnk2-homologous domains lie at 28–130 (DMET…DKFF) and 135–246 (ETNP…TYNS). N-linked (GlcNAc...) asparagine glycans are attached at residues Asn39, Asn43, Asn59, Asn68, Asn89, Asn99, Asn107, Asn208, and Asn245. The chain crosses the membrane as a helical span at residues 268–286 (LLGGMVLAVSVSVFAFLSL). A topological domain (cytoplasmic) is located at residue Val287.

It belongs to the cysteine-rich repeat secretory protein family.

It localises to the membrane. In Arabidopsis thaliana (Mouse-ear cress), this protein is Cysteine-rich repeat secretory protein 58 (CRRSP58).